A 302-amino-acid chain; its full sequence is Heme A synthase (302 aa).

The Cytoplasmic segment spans residues 1–8; that stretch reads MFSKKNLK. The chain crosses the membrane as a helical span at residues 9–29; it reads WLSVLATVIMAFVQLGGALVT. The Extracellular portion of the chain corresponds to 30-67; it reads KTGSADGCGSDWPLCHGAFLPQNLPIQTLIELSHRAVS. Cysteine 37 and cysteine 44 are disulfide-bonded. Glutamate 60 is a catalytic residue. Histidine 63 is a binding site for heme o. Residues 68-88 form a helical membrane-spanning segment; it reads GLSLIVVLWLVIVAWKHIGYI. Residues 89–93 are Cytoplasmic-facing; sequence KEVKP. The chain crosses the membrane as a helical span at residues 94–114; it reads LSCISVGFLLIQALVGAAAVM. The Extracellular portion of the chain corresponds to 115 to 122; that stretch reads WQQNAYVL. A helical membrane pass occupies residues 123–143; it reads ALHFGISLISFSSVFVLTLII. Histidine 125 serves as a coordination point for heme o. Residues 144–161 are Cytoplasmic-facing; it reads YEVDRKYEADELFIRKPL. Residues 162–182 form a helical membrane-spanning segment; the sequence is RIYTWIMALIVYMTIYTGALV. The Extracellular portion of the chain corresponds to 183–215; sequence RHKEASLAYGQWPLPFNDLMPHNVQDWVNLTHR. Heme b is bound at residue histidine 214. Residues 216–236 form a helical membrane-spanning segment; sequence GMALIAFIWILITFIHAVNNY. The Cytoplasmic portion of the chain corresponds to 237–244; that stretch reads RENRTIRY. A helical transmembrane segment spans residues 245–265; the sequence is GYTAAFILVILQVTTGALSII. Residues 266–271 lie on the Extracellular side of the membrane; sequence TEVNLF. A helical transmembrane segment spans residues 272–292; the sequence is IALLHALFITLLFGLIAYFII. Histidine 276 lines the heme b pocket. Residues 293-302 are Cytoplasmic-facing; sequence LMLRTIRSGG.

The protein belongs to the COX15/CtaA family. Type 1 subfamily. As to quaternary structure, interacts with CtaB. It depends on heme b as a cofactor.

It is found in the cell membrane. The enzyme catalyses Fe(II)-heme o + 2 A + H2O = Fe(II)-heme a + 2 AH2. The protein operates within porphyrin-containing compound metabolism; heme A biosynthesis; heme A from heme O: step 1/1. Functionally, catalyzes the conversion of heme O to heme A by two successive hydroxylations of the methyl group at C8. The first hydroxylation forms heme I, the second hydroxylation results in an unstable dihydroxymethyl group, which spontaneously dehydrates, resulting in the formyl group of heme A. This Staphylococcus saprophyticus subsp. saprophyticus (strain ATCC 15305 / DSM 20229 / NCIMB 8711 / NCTC 7292 / S-41) protein is Heme A synthase.